The chain runs to 860 residues: Protein argonaute-3 (860 aa).

M1 is subject to N-acetylmethionine. One can recognise a PAZ domain in the interval 230–349 (PVIQFMCEVL…LPLEVCNIVA (120 aa)). Residues 518–819 (LIIVILPGKT…VAFRARYHLV (302 aa)) form the Piwi domain. An interaction with guide RNA region spans residues 530–567 (YAEVKRVGDTLLGMATQCVQVKNVIKTSPQTLSNLCLK). 3 residues coordinate a divalent metal cation: D598, E638, and D670. Residues 758 to 805 (QGTSRPSHYHVLWDDNFFTADELQLLTYQLCHTYVRCTRSVSIPAPAY) are interaction with guide RNA. A divalent metal cation is bound at residue H808. S825 is modified (phosphoserine).

The protein belongs to the argonaute family. Ago subfamily. As to quaternary structure, interacts with EIF4B, IMP8, PRMT5 and TNRC6B. Interacts with APOBEC3F, APOBEC3G and APOBEC3H. Interacts with EDC4. Post-translationally, ubiquitinated on surface-exposed lysines by a SCF-like E3 ubiquitin-protein ligase complex containing ZSWIM8 during target-directed microRNA degradation (TDMD), a process that mediates degradation of microRNAs (miRNAs). Ubiquitination by the SCF-like E3 ubiquitin-protein ligase complex containing ZSWIM8 leads to its subsequent degradation, thereby exposing miRNAs for degradation. ZSWIM8 recognizes and binds AGO3 when it is engaged with a TDMD target.

It is found in the cytoplasm. The protein localises to the P-body. The catalysed reaction is Endonucleolytic cleavage to 5'-phosphomonoester.. Functionally, required for RNA-mediated gene silencing (RNAi). Binds to short RNAs such as microRNAs (miRNAs) and represses the translation of mRNAs which are complementary to them. Proposed to be involved in stabilization of small RNA derivates (siRNA) derived from processed RNA polymerase III-transcribed Alu repeats containing a DR2 retinoic acid response element (RARE) in stem cells and in the subsequent siRNA-dependent degradation of a subset of RNA polymerase II-transcribed coding mRNAs by recruiting a mRNA decapping complex involving EDC4. Possesses RNA slicer activity but only on select RNAs bearing 5'- and 3'-flanking sequences to the region of guide-target complementarity. The sequence is that of Protein argonaute-3 (Ago3) from Mus musculus (Mouse).